Reading from the N-terminus, the 161-residue chain is Zinc finger A20 and AN1 domain-containing stress-associated protein 9 (161 aa).

The segment at 17 to 51 adopts an A20-type zinc-finger fold; sequence PEAPILCVNNCGFFGSSMTNNMCSKCYRDFVKVTT. Zn(2+)-binding residues include Cys23, Cys27, Cys39, and Cys42. The tract at residues 62 to 99 is disordered; that stretch reads FTPASSSKTPLEPAKPDEVPAAAVEDKQAAQEPPKPPS. Over residues 75–90 the composition is skewed to basic and acidic residues; sequence AKPDEVPAAAVEDKQA. Residues 96–142 form an AN1-type zinc finger; the sequence is KPPSNRCLSCRKKVGLTGFQCRCGGTFCSTHRYTEAHDCTFDYKKAG. Zn(2+)-binding residues include Cys102, Cys105, Cys116, Cys118, Cys123, His126, His132, and Cys134.

Functionally, may be involved in environmental stress response. This Oryza sativa subsp. japonica (Rice) protein is Zinc finger A20 and AN1 domain-containing stress-associated protein 9 (SAP9).